The following is a 350-amino-acid chain: Small ribosomal subunit biogenesis GTPase RsgA (350 aa).

A compositionally biased stretch (polar residues) spans 1-17; it reads MSKNKLSKGQQRRVNAN. Residues 1 to 33 are disordered; sequence MSKNKLSKGQQRRVNANHQRRLKTSKEKPDYDD. A CP-type G domain is found at 104 to 273; it reads TSVLTRPDFY…VIDSPGVREF (170 aa). Residues 160 to 163 and 214 to 222 each bind GTP; these read NKID and GQSGVGKSS. Zn(2+)-binding residues include C297, C302, H304, and C310.

Belongs to the TRAFAC class YlqF/YawG GTPase family. RsgA subfamily. As to quaternary structure, monomer. Associates with 30S ribosomal subunit, binds 16S rRNA. It depends on Zn(2+) as a cofactor.

The protein localises to the cytoplasm. Functionally, one of several proteins that assist in the late maturation steps of the functional core of the 30S ribosomal subunit. Helps release RbfA from mature subunits. May play a role in the assembly of ribosomal proteins into the subunit. Circularly permuted GTPase that catalyzes slow GTP hydrolysis, GTPase activity is stimulated by the 30S ribosomal subunit. The chain is Small ribosomal subunit biogenesis GTPase RsgA from Escherichia coli O6:H1 (strain CFT073 / ATCC 700928 / UPEC).